The chain runs to 109 residues: Peptide chaperone MftB (109 aa).

It belongs to the peptide chaperone MftB family. As to quaternary structure, interacts with MftA and MftC.

In terms of biological role, peptide chaperone involved in the biosynthesis of the enzyme cofactor mycofactocin (MFT). Binds MftA and MftC with high affinity, and is essential for MftC activity on MftA, likely via the formation of a ternary complex. In Mycobacterium ulcerans (strain Agy99), this protein is Peptide chaperone MftB.